Reading from the N-terminus, the 208-residue chain is uncharacterized protein (208 aa).

The tract at residues Lys-124–Ala-208 is disordered. Residues Thr-133 to Glu-170 show a composition bias toward basic and acidic residues.

It localises to the golgi apparatus. This is an uncharacterized protein from Encephalitozoon cuniculi (strain GB-M1) (Microsporidian parasite).